A 507-amino-acid polypeptide reads, in one-letter code: Maturase K (507 aa).

Belongs to the intron maturase 2 family. MatK subfamily.

It is found in the plastid. The protein resides in the chloroplast. In terms of biological role, usually encoded in the trnK tRNA gene intron. Probably assists in splicing its own and other chloroplast group II introns. The chain is Maturase K from Calocedrus decurrens (California incense-cedar).